The chain runs to 902 residues: Glutamate receptor 4 (902 aa).

The signal sequence occupies residues 1-20; the sequence is MRIICRQIVLLFSGFWGLAM. Over 22–544 the chain is Extracellular; the sequence is AFPSSVQIGG…GVFSFLDPLA (523 aa). N-linked (GlcNAc...) asparagine glycosylation is found at asparagine 52, asparagine 56, asparagine 258, asparagine 371, asparagine 407, and asparagine 414. Cysteine 84 and cysteine 331 are joined by a disulfide. Proline 500, threonine 502, and arginine 507 together coordinate L-glutamate. Residues 545 to 565 form a helical membrane-spanning segment; it reads YEIWMCIVFAYIGVSVVLFLV. Topologically, residues 566–592 are cytoplasmic; the sequence is SRFSPYEWHTEEPEDGKEGPSDQPPNE. The segment at residues 593 to 608 is an intramembrane region (helical; Pore-forming); the sequence is FGIFNSLWFSLGAFMQ. Residues 609–611 lie within the membrane without spanning it; that stretch reads QGC. Cysteine 611 is lipidated: S-palmitoyl cysteine. Over 612 to 617 the chain is Cytoplasmic; the sequence is DISPRS. The chain crosses the membrane as a helical span at residues 618–638; that stretch reads LSGRIVGGVWWFFTLIIISSY. The Extracellular segment spans residues 639–813; sequence TANLAAFLTV…DKTSALSLSN (175 aa). L-glutamate is bound by residues serine 676, threonine 677, and glutamate 727. Cysteine 740 and cysteine 795 form a disulfide bridge. Residues 814–834 traverse the membrane as a helical segment; that stretch reads VAGVFYILVGGLGLAMLVALI. Over 835–902 the chain is Cytoplasmic; sequence EFCYKSRAEA…GLAVIASDLP (68 aa). Cysteine 837 carries S-palmitoyl cysteine lipidation. Serine 862 bears the Phosphoserine mark.

This sequence belongs to the glutamate-gated ion channel (TC 1.A.10.1) family. GRIA4 subfamily. In terms of assembly, homotetramer or heterotetramer of pore-forming glutamate receptor subunits. Tetramers may be formed by the dimerization of dimers. Interacts with EPB41L1 via its C-terminus. Isoform 3 interacts with PICK1. Found in a complex with GRIA1, GRIA2, GRIA3, CNIH2, CNIH3, CACNG2, CACNG3, CACNG4, CACNG5, CACNG7 and CACNG8. Interacts with CACNG5 and PRKCG. Found in a complex with GRIA1, GRIA2, GRIA3, DLG4, CACNG8 and CNIH2. In terms of processing, palmitoylated. Depalmitoylated upon L-glutamate stimulation. ZDHHC3/GODZ specifically palmitoylates Cys-611, which leads to Golgi retention and decreased cell surface expression. In contrast, Cys-837 palmitoylation does not affect cell surface expression but regulates stimulation-dependent endocytosis. Phosphorylated at Ser-862 by PRKCG; phosphorylation increases plasma membrane-associated GRI4 expression.

The protein localises to the cell membrane. The protein resides in the postsynaptic cell membrane. It localises to the cell projection. Its subcellular location is the dendrite. The enzyme catalyses Ca(2+)(in) = Ca(2+)(out). It carries out the reaction Na(+)(in) = Na(+)(out). The catalysed reaction is Mg(2+)(in) = Mg(2+)(out). Ionotropic glutamate receptor that functions as a ligand-gated cation channel, gated by L-glutamate and glutamatergic agonists such as alpha-amino-3-hydroxy-5-methyl-4-isoxazolepropionic acid (AMPA), quisqualic acid, and kainic acid. L-glutamate acts as an excitatory neurotransmitter at many synapses in the central nervous system and plays an important role in fast excitatory synaptic transmission. Binding of the excitatory neurotransmitter L-glutamate induces a conformation change, leading to the opening of the cation channel, and thereby converts the chemical signal to an electrical impulse upon entry of monovalent and divalent cations such as sodium and calcium. The receptor then desensitizes rapidly and enters a transient inactive state, characterized by the presence of bound agonist. In the presence of CACNG8, shows resensitization which is characterized by a delayed accumulation of current flux upon continued application of L-glutamate. This chain is Glutamate receptor 4, found in Mus musculus (Mouse).